Consider the following 206-residue polypeptide: MARYLGPKLKLSRREGTDLFLKSGVRAIESKCKIDNAPGVHGARKPRLSDYGLQLREKQKVRRMYGVLEKQFRNYYKESARLQGNTGENLLQLLEGRLDNVVYRMGFGATRAESRQLVSHKAVLVNGKVVNIPSFNVKASDVIAIREKAKKQSRIGAALEIAGQREVPTWVSVDATKMEGVFTRQPERSDLSAEINEQLIIELYSK.

The region spanning 96-156 (GRLDNVVYRM…EKAKKQSRIG (61 aa)) is the S4 RNA-binding domain.

This sequence belongs to the universal ribosomal protein uS4 family. Part of the 30S ribosomal subunit. Contacts protein S5. The interaction surface between S4 and S5 is involved in control of translational fidelity.

One of the primary rRNA binding proteins, it binds directly to 16S rRNA where it nucleates assembly of the body of the 30S subunit. Functionally, with S5 and S12 plays an important role in translational accuracy. The protein is Small ribosomal subunit protein uS4A of Psychromonas ingrahamii (strain DSM 17664 / CCUG 51855 / 37).